The following is a 345-amino-acid chain: N-acetyl-gamma-glutamyl-phosphate reductase (345 aa).

Cys149 is a catalytic residue.

The protein belongs to the NAGSA dehydrogenase family. Type 1 subfamily.

The protein localises to the cytoplasm. It catalyses the reaction N-acetyl-L-glutamate 5-semialdehyde + phosphate + NADP(+) = N-acetyl-L-glutamyl 5-phosphate + NADPH + H(+). Its pathway is amino-acid biosynthesis; L-arginine biosynthesis; N(2)-acetyl-L-ornithine from L-glutamate: step 3/4. Catalyzes the NADPH-dependent reduction of N-acetyl-5-glutamyl phosphate to yield N-acetyl-L-glutamate 5-semialdehyde. The protein is N-acetyl-gamma-glutamyl-phosphate reductase of Halalkalibacterium halodurans (strain ATCC BAA-125 / DSM 18197 / FERM 7344 / JCM 9153 / C-125) (Bacillus halodurans).